A 257-amino-acid polypeptide reads, in one-letter code: MDTTQSNGQTDTQGQLHAQTAEGGNDFGRRNPLEIGVQLRNLVNRGDFLTVQYAGGQLVTRLLEVDVRGRTFTFDWGALSDQNRGLLGAPRCQFHAQPDGVRVEFATATPRETRFEGLPAFEADFPEVLFYVQRREYFRVDAPILDPYVCSGRLPEGDTFRFEVHDLSLGGVGMRTADERVAELPMGTRLLDCELVLGALGRLSLDLQLVSHRSTALPNGTQRYQLGFRFLTLPGSAENTLQRLITQLEMKRRSLVR.

Residues Met-1–Ala-18 show a composition bias toward polar residues. The interval Met-1–Arg-30 is disordered. The PilZ domain maps to Gln-133–Thr-246.

This sequence belongs to the YcgR family. Monomer. Interacts with the flagellar basal bodies.

The protein resides in the bacterial flagellum basal body. In terms of biological role, acts as a flagellar brake, regulating swimming and swarming in a bis-(3'-5') cyclic diguanylic acid (c-di-GMP)-dependent manner. Binds 1 c-di-GMP dimer per subunit. Increasing levels of c-di-GMP lead to decreased motility. This chain is Flagellar brake protein YcgR 1, found in Paraburkholderia phytofirmans (strain DSM 17436 / LMG 22146 / PsJN) (Burkholderia phytofirmans).